The sequence spans 312 residues: Glycerol-3-phosphate dehydrogenase [NAD(P)+] (312 aa).

4 residues coordinate NADPH: W11, R30, R31, and K95. The sn-glycerol 3-phosphate site is built by K95, G123, and S125. An NADPH-binding site is contributed by A127. Residues K177, D230, S240, R241, and N242 each contribute to the sn-glycerol 3-phosphate site. K177 (proton acceptor) is an active-site residue. R241 is a binding site for NADPH. NADPH contacts are provided by V265 and E267.

This sequence belongs to the NAD-dependent glycerol-3-phosphate dehydrogenase family.

It localises to the cytoplasm. It carries out the reaction sn-glycerol 3-phosphate + NAD(+) = dihydroxyacetone phosphate + NADH + H(+). It catalyses the reaction sn-glycerol 3-phosphate + NADP(+) = dihydroxyacetone phosphate + NADPH + H(+). The protein operates within membrane lipid metabolism; glycerophospholipid metabolism. Catalyzes the reduction of the glycolytic intermediate dihydroxyacetone phosphate (DHAP) to sn-glycerol 3-phosphate (G3P), the key precursor for phospholipid synthesis. The polypeptide is Glycerol-3-phosphate dehydrogenase [NAD(P)+] (Helicobacter pylori (strain Shi470)).